The sequence spans 458 residues: Adenylosuccinate synthetase (458 aa).

Residues 11 to 17 (GDEGKGG) and 39 to 41 (GHT) contribute to the GTP site. Asp-12 (proton acceptor) is an active-site residue. The Mg(2+) site is built by Asp-12 and Gly-39. Residues 12–15 (DEGK), 37–40 (NAGH), Thr-127, Arg-141, Gln-232, Thr-247, and Arg-330 each bind IMP. His-40 functions as the Proton donor in the catalytic mechanism. 326–332 (TVTGRPR) serves as a coordination point for substrate. Residues Arg-332, 358-360 (HLD), and 443-445 (GVG) contribute to the GTP site.

This sequence belongs to the adenylosuccinate synthetase family. As to quaternary structure, homodimer. Mg(2+) serves as cofactor.

Its subcellular location is the cytoplasm. The catalysed reaction is IMP + L-aspartate + GTP = N(6)-(1,2-dicarboxyethyl)-AMP + GDP + phosphate + 2 H(+). It participates in purine metabolism; AMP biosynthesis via de novo pathway; AMP from IMP: step 1/2. Functionally, plays an important role in the de novo pathway of purine nucleotide biosynthesis. Catalyzes the first committed step in the biosynthesis of AMP from IMP. In Haloarcula marismortui (strain ATCC 43049 / DSM 3752 / JCM 8966 / VKM B-1809) (Halobacterium marismortui), this protein is Adenylosuccinate synthetase.